Consider the following 188-residue polypeptide: D-glycero-beta-D-manno-heptose-1,7-bisphosphate 7-phosphatase (188 aa).

Positions 92, 94, 107, and 109 each coordinate Zn(2+).

The protein belongs to the GmhB family.

It localises to the cytoplasm. It carries out the reaction D-glycero-beta-D-manno-heptose 1,7-bisphosphate + H2O = D-glycero-beta-D-manno-heptose 1-phosphate + phosphate. The protein operates within nucleotide-sugar biosynthesis; ADP-L-glycero-beta-D-manno-heptose biosynthesis; ADP-L-glycero-beta-D-manno-heptose from D-glycero-beta-D-manno-heptose 7-phosphate: step 2/4. Its pathway is bacterial outer membrane biogenesis; LPS core biosynthesis. In terms of biological role, converts the D-glycero-beta-D-manno-heptose 1,7-bisphosphate intermediate into D-glycero-beta-D-manno-heptose 1-phosphate by removing the phosphate group at the C-7 position. The protein is D-glycero-beta-D-manno-heptose-1,7-bisphosphate 7-phosphatase (gmhB1) of Photorhabdus laumondii subsp. laumondii (strain DSM 15139 / CIP 105565 / TT01) (Photorhabdus luminescens subsp. laumondii).